The sequence spans 251 residues: MTDAIRPLIAGNWKMNGLKASAAEFDAMLNGAADVATKADLLVCPPATLIAAFADKARGKKVAVGAQDCHPKASGAHTGDIAAEMLANAGATAIIVGHSERRADHGEGDALVRQKAEAAWRAGVTAIVCIGETQAQRDAGQTLDILRGQLDGSLPDGSTAANLVVAYEPVWAIGTGLTPTVQDVEQIHGFIREFLTSRFSVDGAKMRILYGGSVKPSNAAELMAVKNVNGALVGGASLKAADFLAIAKGCP.

12-14 (NWK) is a binding site for substrate. The active-site Electrophile is H98. Residue E168 is the Proton acceptor of the active site. Substrate is bound by residues G174, S213, and 234–235 (GG).

Belongs to the triosephosphate isomerase family. In terms of assembly, homodimer.

The protein localises to the cytoplasm. The enzyme catalyses D-glyceraldehyde 3-phosphate = dihydroxyacetone phosphate. It participates in carbohydrate biosynthesis; gluconeogenesis. Its pathway is carbohydrate degradation; glycolysis; D-glyceraldehyde 3-phosphate from glycerone phosphate: step 1/1. Functionally, involved in the gluconeogenesis. Catalyzes stereospecifically the conversion of dihydroxyacetone phosphate (DHAP) to D-glyceraldehyde-3-phosphate (G3P). The polypeptide is Triosephosphate isomerase (Bradyrhizobium diazoefficiens (strain JCM 10833 / BCRC 13528 / IAM 13628 / NBRC 14792 / USDA 110)).